We begin with the raw amino-acid sequence, 244 residues long: CTD nuclear envelope phosphatase 1 (244 aa).

A helical membrane pass occupies residues 7-29 (LLGLRGFVAFAAKLWSFVLYLLR). An FCP1 homology domain is found at 57-224 (SQVKRKVLVL…LNLLPMLDAL (168 aa)).

This sequence belongs to the dullard family. As to quaternary structure, interacts with bmpr1a, bmpr1b and bmpr2.

The protein localises to the membrane. The protein resides in the cytoplasm. Its subcellular location is the perinuclear region. It carries out the reaction O-phospho-L-seryl-[protein] + H2O = L-seryl-[protein] + phosphate. The catalysed reaction is O-phospho-L-threonyl-[protein] + H2O = L-threonyl-[protein] + phosphate. Its function is as follows. Serine/threonine protein phosphatase that may dephosphorylate and activate lipins. Lipins are phosphatidate phosphatases that catalyze the conversion of phosphatidic acid to diacylglycerol and control the metabolism of fatty acids at different levels. May indirectly modulate the lipid composition of nuclear and/or endoplasmic reticulum membranes and be required for proper nuclear membrane morphology and/or dynamics. May also indirectly regulate the production of lipid droplets and triacylglycerol. Induces neuronal differentiation by antagonizing BMP signaling. Acts both by dephosphorylating BMPR1A and by promoting BMPR2 proteasomal degradation. This is CTD nuclear envelope phosphatase 1 (ctdnep1) from Xenopus tropicalis (Western clawed frog).